The chain runs to 81 residues: Cytochrome b559 subunit alpha (81 aa).

Residues 21 to 35 (VIHSITIPMLFIAGW) traverse the membrane as a helical segment. Heme is bound at residue H23.

It belongs to the PsbE/PsbF family. In terms of assembly, heterodimer of an alpha subunit and a beta subunit. PSII is composed of 1 copy each of membrane proteins PsbA, PsbB, PsbC, PsbD, PsbE, PsbF, PsbH, PsbI, PsbJ, PsbK, PsbL, PsbM, PsbT, PsbX, PsbY, PsbZ, Psb30/Ycf12, peripheral proteins PsbO, CyanoQ (PsbQ), PsbU, PsbV and a large number of cofactors. It forms dimeric complexes. Heme b serves as cofactor.

Its subcellular location is the cellular thylakoid membrane. In terms of biological role, this b-type cytochrome is tightly associated with the reaction center of photosystem II (PSII). PSII is a light-driven water:plastoquinone oxidoreductase that uses light energy to abstract electrons from H(2)O, generating O(2) and a proton gradient subsequently used for ATP formation. It consists of a core antenna complex that captures photons, and an electron transfer chain that converts photonic excitation into a charge separation. The chain is Cytochrome b559 subunit alpha from Rippkaea orientalis (strain PCC 8801 / RF-1) (Cyanothece sp. (strain PCC 8801)).